We begin with the raw amino-acid sequence, 142 residues long: Probable inactive dual specificity protein phosphatase-like At4g18593 (142 aa).

It belongs to the protein-tyrosine phosphatase family. Non-receptor class dual specificity subfamily.

The protein is Probable inactive dual specificity protein phosphatase-like At4g18593 of Arabidopsis thaliana (Mouse-ear cress).